Reading from the N-terminus, the 282-residue chain is Heat stress transcription factor A-6a (282 aa).

Residues 17-111 (PTAFLTKTYN…LLKNIKRRKT (95 aa)) mediate DNA binding. Residues 111–177 (TSSQTQTQSL…MMMNFLLKKI (67 aa)) are hydrophobic repeat HR-A/B. A Bipartite nuclear localization signal motif is present at residues 175–190 (KKIKKPSFLQSLRKRN). Positions 261 to 270 (EGIWKGFVLS) match the AHA motif.

It belongs to the HSF family. Class A subfamily. As to quaternary structure, homotrimer. In terms of processing, exhibits temperature-dependent phosphorylation.

The protein localises to the nucleus. Transcriptional activator that specifically binds DNA sequence 5'-AGAAnnTTCT-3' known as heat shock promoter elements (HSE). The chain is Heat stress transcription factor A-6a (HSFA6A) from Arabidopsis thaliana (Mouse-ear cress).